The sequence spans 140 residues: 3-hydroxyacyl-[acyl-carrier-protein] dehydratase FabZ (140 aa).

Residue His47 is part of the active site.

This sequence belongs to the thioester dehydratase family. FabZ subfamily.

The protein resides in the cytoplasm. It carries out the reaction a (3R)-hydroxyacyl-[ACP] = a (2E)-enoyl-[ACP] + H2O. Its function is as follows. Involved in unsaturated fatty acids biosynthesis. Catalyzes the dehydration of short chain beta-hydroxyacyl-ACPs and long chain saturated and unsaturated beta-hydroxyacyl-ACPs. This Streptococcus equi subsp. equi (strain 4047) protein is 3-hydroxyacyl-[acyl-carrier-protein] dehydratase FabZ.